We begin with the raw amino-acid sequence, 386 residues long: Putative gustatory receptor 22b (386 aa).

Residues 1–48 (MFGSSREIRPYLARQMLKTTLYGSWLLGIFPFTLDSGKRIRQLRRSRC) are Cytoplasmic-facing. Residues 49–69 (LTLYGLVLNYFLIFTLIRLAF) traverse the membrane as a helical segment. Topologically, residues 70 to 89 (EYRKHKLEAFKRNPVLEMIN) are extracellular. Residues 90 to 110 (VVIGIINVLSALIVHFMNFWG) form a helical membrane-spanning segment. The Cytoplasmic portion of the chain corresponds to 111-155 (SRKVGEICNELLILEYQDFEGLNGRNCPNFNCFVIQKCLTILGQL). Residues 156–176 (LSFFTLNFALPGLEFHICLVL) form a helical membrane-spanning segment. Over 177-178 (LS) the chain is Extracellular. Residues 179–199 (CLMEFSLNLNIMHYHVGVLLI) traverse the membrane as a helical segment. Over 200–254 (YRYVWLINEQLKDLVSQLKLNPETDFSRIHQFLSLYKRLLELNRKLVIAYEYQMT) the chain is Cytoplasmic. The chain crosses the membrane as a helical span at residues 255-275 (LFIIAQLSGNIVVIYFLIVYG). Topologically, residues 276 to 282 (LSMRTYS) are extracellular. A helical transmembrane segment spans residues 283-303 (IFLVAFPNSLLINIWDFWLCI). Residues 304–363 (AACDLTEKAGDETAIILKIFSDLEHRDDKLEMSVNEFAWLCSHRKFRFQLCGLFSMNCRM) are Cytoplasmic-facing. Residues 364 to 384 (GFKMIITTFLYLVYLVQFDYM) traverse the membrane as a helical segment. At 385 to 386 (NL) the chain is on the extracellular side.

Belongs to the insect chemoreceptor superfamily. Gustatory receptor (GR) family. Gr22e subfamily. As to expression, expressed in taste bristles in the foreleg and labial palps. In larvae, is expressed in neurons of the dorsal and posterior pharyngeal sense organs. Expressed in taste neurons that mediate sensitivity to bitter compounds.

The protein resides in the cell membrane. Its function is as follows. Probable gustatory receptor which mediates acceptance or avoidance behavior, depending on its substrates. Seems to be involved in the sensing of bitter taste since it is expressed in neurons that mediate sensitivity to bitter compounds. This Drosophila melanogaster (Fruit fly) protein is Putative gustatory receptor 22b.